The sequence spans 1203 residues: Zinc finger and BTB domain-containing protein 38 (1203 aa).

Positions 33-100 (CDVTIIVEDT…IYSSTVVVRR (68 aa)) constitute a BTB domain. Residue Lys43 forms a Glycyl lysine isopeptide (Lys-Gly) (interchain with G-Cter in SUMO2) linkage. Ser130 is subject to Phosphoserine. Glycyl lysine isopeptide (Lys-Gly) (interchain with G-Cter in SUMO2) cross-links involve residues Lys145, Lys148, Lys151, and Lys260. Residues 230 to 334 (EAYRSQPLRE…PSETPGPPAA (105 aa)) are disordered. Residues 269–280 (TQTQDSDSTTEN) show a composition bias toward polar residues. The interval 299-522 (PAPILSHSEP…RRYQCIFCLE (224 aa)) is interaction with CBFA2T3. Positions 313-322 (GDVHFPREDE) are enriched in basic and acidic residues. The segment at 341–363 (YNCSCCSKSFDSSTLLGAHMQLH) adopts a C2H2-type 1 zinc-finger fold. The C2H2-type 2; degenerate zinc finger occupies 370 to 394 (FVCKYCNKQFTTLNRLDRHEQICMR). 3 C2H2-type zinc fingers span residues 459–481 (YSCVVCKRSYVTLSSLRRHANVH), 487–509 (YPCHYCNKVFALAEYRTRHEIWH), and 515–538 (YQCIFCLETFMTYYILKNHQKSFH). Residues Lys549 and Lys556 each participate in a glycyl lysine isopeptide (Lys-Gly) (interchain with G-Cter in SUMO2) cross-link. Composition is skewed to polar residues over residues 581 to 598 (RNSSYESAQGNRQRNESP), 607 to 628 (LPSSEMPTLNFQDGRNSLTSSP), 635 to 644 (PSWQGTPTSA), and 731 to 741 (SNHQSPSQPVA). 2 disordered regions span residues 581 to 644 (RNSS…PTSA) and 731 to 776 (SNHQ…VPCN). The span at 747-757 (KDSKPEADKAS) shows a compositional bias: basic and acidic residues. Residues Lys750, Lys755, Lys796, Lys806, Lys813, Lys834, Lys842, and Lys849 each participate in a glycyl lysine isopeptide (Lys-Gly) (interchain with G-Cter in SUMO2) cross-link. Disordered stretches follow at residues 857 to 882 (KPKYQMQEETLPRESDPETRGDSPLG) and 895 to 914 (FDEVSDQDSTDKPWRPYYNY). Positions 866 to 877 (TLPRESDPETRG) are enriched in basic and acidic residues. Residues Lys915, Lys971, Lys976, Lys984, Lys988, Lys998, Lys1024, and Lys1033 each participate in a glycyl lysine isopeptide (Lys-Gly) (interchain with G-Cter in SUMO2) cross-link. 5 consecutive C2H2-type zinc fingers follow at residues 1017-1039 (YICELCAKQFQSSSTLKMHMRCH), 1045-1067 (YQCKTCGRRFSVQGNLQKHERIH), 1073-1095 (FICQYCNKAFTLNETLKIHERIH), 1101-1123 (YHCQFCFQGFLYLSTKRNHERRH), and 1132-1154 (FACFQCPKICKTAAALRMHQKKH). Glycyl lysine isopeptide (Lys-Gly) (interchain with G-Cter in SUMO2) cross-links involve residues Lys1116, Lys1139, Lys1142, Lys1157, and Lys1190. The interval 1172-1203 (NSDLLESQPCTDSEDSDQKDDIKKPLLKMSFE) is disordered.

As to quaternary structure, interacts with CBFA2T3, ZBTB4 and RBBP6. Post-translationally, ubiquitinated by RBBP6; leading to its degradation by the proteasome. In terms of tissue distribution, widely expressed throughout the adult brain where it is found mainly in neurons. Also expressed in the adrenal medulla. Not detected in non-neural tissues including heart, spleen, liver and muscle. In the embryo, expressed in the developing brain and spinal cord but not in the migratory neural crest. Also expressed in the limbs, transiently in somites, and in the embryonic liver. In the embryonic neural tube, expression is restricted to late postmitotic neurons.

Its subcellular location is the nucleus. It is found in the chromosome. In terms of biological role, transcriptional regulator with bimodal DNA-binding specificity. Binds with a higher affinity to methylated CpG dinucleotides in the consensus sequence 5'-CGCG-3' but can also bind to E-box elements (5'-CACGTG-3'). Can also bind specifically to a single methyl-CpG pair. Represses transcription in a methyl-CpG-dependent manner. Plays an important role in regulating DNA-replication and common fragile sites (CFS) stability in a RBBP6- and MCM10-dependent manner; represses expression of MCM10 which plays an important role in DNA-replication. Acts as a transcriptional activator. May be involved in the differentiation and/or survival of late postmitotic neurons. This chain is Zinc finger and BTB domain-containing protein 38, found in Rattus norvegicus (Rat).